We begin with the raw amino-acid sequence, 544 residues long: Chaperonin GroEL 2 (544 aa).

ATP-binding positions include 29-32 (TLGP), Lys50, 86-90 (DGTTT), Gly414, and Asp494.

This sequence belongs to the chaperonin (HSP60) family. In terms of assembly, forms a cylinder of 14 subunits composed of two heptameric rings stacked back-to-back. Interacts with the co-chaperonin GroES.

Its subcellular location is the cytoplasm. The enzyme catalyses ATP + H2O + a folded polypeptide = ADP + phosphate + an unfolded polypeptide.. Functionally, together with its co-chaperonin GroES, plays an essential role in assisting protein folding. The GroEL-GroES system forms a nano-cage that allows encapsulation of the non-native substrate proteins and provides a physical environment optimized to promote and accelerate protein folding. The protein is Chaperonin GroEL 2 of Psychromonas ingrahamii (strain DSM 17664 / CCUG 51855 / 37).